Reading from the N-terminus, the 86-residue chain is U13-theraphotoxin-Cg1b (86 aa).

A signal peptide spans 1-21; the sequence is MKVSVLITLAVLGVMFVWASA. A propeptide spanning residues 22-51 is cleaved from the precursor; it reads AELEQSGSDQKDSPAWLKSMERIFQSEERE. Cystine bridges form between Cys52–Cys66, Cys59–Cys71, and Cys65–Cys78.

Belongs to the neurotoxin 10 (Hwtx-1) family. 41 (Jztx-36) subfamily. As to expression, expressed by the venom gland.

The protein localises to the secreted. In terms of biological role, probable ion channel inhibitor. This is U13-theraphotoxin-Cg1b from Chilobrachys guangxiensis (Chinese earth tiger tarantula).